We begin with the raw amino-acid sequence, 391 residues long: NADH-quinone oxidoreductase subunit D (391 aa).

The protein belongs to the complex I 49 kDa subunit family. NDH-1 is composed of 14 different subunits. Subunits NuoB, C, D, E, F, and G constitute the peripheral sector of the complex.

Its subcellular location is the cell inner membrane. It catalyses the reaction a quinone + NADH + 5 H(+)(in) = a quinol + NAD(+) + 4 H(+)(out). NDH-1 shuttles electrons from NADH, via FMN and iron-sulfur (Fe-S) centers, to quinones in the respiratory chain. The immediate electron acceptor for the enzyme in this species is believed to be ubiquinone. Couples the redox reaction to proton translocation (for every two electrons transferred, four hydrogen ions are translocated across the cytoplasmic membrane), and thus conserves the redox energy in a proton gradient. This Rickettsia rickettsii (strain Iowa) protein is NADH-quinone oxidoreductase subunit D.